A 438-amino-acid chain; its full sequence is Glutamyl-tRNA(Gln) amidotransferase subunit D (438 aa).

In terms of domain architecture, Asparaginase/glutaminase spans 92–422 (PDVTIIGTGG…EEVRRMMLTN (331 aa)). Residues Thr-102, Thr-178, Asp-179, and Lys-256 contribute to the active site.

This sequence belongs to the asparaginase 1 family. GatD subfamily. In terms of assembly, heterodimer of GatD and GatE.

It catalyses the reaction L-glutamyl-tRNA(Gln) + L-glutamine + ATP + H2O = L-glutaminyl-tRNA(Gln) + L-glutamate + ADP + phosphate + H(+). In terms of biological role, allows the formation of correctly charged Gln-tRNA(Gln) through the transamidation of misacylated Glu-tRNA(Gln) in organisms which lack glutaminyl-tRNA synthetase. The reaction takes place in the presence of glutamine and ATP through an activated gamma-phospho-Glu-tRNA(Gln). The GatDE system is specific for glutamate and does not act on aspartate. The protein is Glutamyl-tRNA(Gln) amidotransferase subunit D of Pyrococcus horikoshii (strain ATCC 700860 / DSM 12428 / JCM 9974 / NBRC 100139 / OT-3).